We begin with the raw amino-acid sequence, 280 residues long: MKYSLCTISFRHQLISFTDIVQFAYENGFEGIELWGTHAQNLYMQEYETTERELNCLKDKTLEITMISDYLDISLSADFEKTIEKCEQLAILANWFKTNKIRTFAGQKGSADFSQQERQEYVNRIRMICELFAQHNMYVLLETHPNTLTDTLPSTLELLGEVDHPNLKINLDFLHIWESGADPVDSFQQLRPWIQHYHFKNISSADYLHVFEPNNVYAAAGNRTGMVPLFEGIVNYDEIIQEVRDTDHFASLEWFGHNAKDILKAEMKVLTNRNLEVVTS.

Substrate contacts are provided by Y70, R102, and E142. Residue E142 coordinates Mn(2+). H144 acts as the Proton acceptor in catalysis. Substrate is bound by residues D172 and H175. D172 serves as a coordination point for Mn(2+). H198 contacts Mn(2+). The substrate site is built by Y217 and E253. Residue E253 coordinates Mn(2+).

In terms of assembly, homodimer. Mn(2+) serves as cofactor.

It carries out the reaction 3-dehydroshikimate = 3,4-dihydroxybenzoate + H2O. It participates in aromatic compound metabolism; 3,4-dihydroxybenzoate biosynthesis; 3,4-dihydroxybenzoate from 3-dehydroquinate: step 2/2. Its pathway is siderophore biosynthesis; petrobactin biosynthesis. Functionally, involved in the biosynthesis of petrobactin, a catecholate siderophore that functions in both iron acquisition and virulence. Catalyzes the conversion of 3-dehydroshikimate to 3,4-dihydroxybenzoate (3,4-DHBA). The chain is 3-dehydroshikimate dehydratase from Bacillus anthracis.